Here is a 242-residue protein sequence, read N- to C-terminus: Transcriptional activator protein RaiR (242 aa).

Positions 177–242 (KVADLPRLSR…EQLLGPRRSN (66 aa)) constitute an HTH luxR-type domain. Positions 201-220 (AKQICARLSISVSAVQLYLA) form a DNA-binding region, H-T-H motif.

The protein belongs to the autoinducer-regulated transcriptional regulatory protein family.

This Rhizobium etli protein is Transcriptional activator protein RaiR (raiR).